The following is a 161-amino-acid chain: Ribosome maturation factor RimP (161 aa).

Belongs to the RimP family.

It localises to the cytoplasm. Its function is as follows. Required for maturation of 30S ribosomal subunits. This chain is Ribosome maturation factor RimP, found in Rickettsia massiliae (strain Mtu5).